The primary structure comprises 569 residues: Proton-coupled zinc antiporter SLC30A9, mitochondrial (569 aa).

The N-terminal 68 residues, 1–68, are a transit peptide targeting the mitochondrion; it reads MLPGLAAAAA…IGTLSQVKLY (68 aa). Helical transmembrane passes span 240 to 260, 315 to 335, 343 to 363, 393 to 413, and 425 to 445; these read VVMVAICINGLNCFFKFLAWI, GVGIFMMGAGLSWYHGVMGLL, LLWAYCILAGSLVSEGATLLV, VILLEDTAAVLGVIIAATCMG, and SLGSLGVGTLLGMVSAFLIYT. An LXXLL motif motif is present at residues 463-467; the sequence is LTELL.

It belongs to the cation diffusion facilitator (CDF) transporter (TC 2.A.4) family. SLC30A subfamily. As to quaternary structure, interacts with GRIP1, ESR1, AR and CTNNB1.

The protein localises to the mitochondrion membrane. It localises to the nucleus. The protein resides in the endoplasmic reticulum. It carries out the reaction Zn(2+)(in) + 2 H(+)(out) = Zn(2+)(out) + 2 H(+)(in). Its function is as follows. Mitochondrial proton-coupled zinc ion antiporter mediating the export of zinc from the mitochondria and involved in zinc homeostasis, zinc mobilization as well as mitochondrial morphology and health. In nucleus, functions as a secondary coactivator for nuclear receptors by cooperating with p160 coactivators subtypes. Plays a role in transcriptional activation of Wnt-responsive genes. The protein is Proton-coupled zinc antiporter SLC30A9, mitochondrial (SLC30A9) of Pongo abelii (Sumatran orangutan).